The sequence spans 304 residues: Pyridoxal 5'-phosphate synthase subunit PdxS (304 aa).

Asp-34 provides a ligand contact to D-ribose 5-phosphate. Residue Lys-91 is the Schiff-base intermediate with D-ribose 5-phosphate of the active site. Residue Gly-163 participates in D-ribose 5-phosphate binding. Arg-175 provides a ligand contact to D-glyceraldehyde 3-phosphate. Residues Gly-224 and Gly-245 to Ser-246 each bind D-ribose 5-phosphate.

This sequence belongs to the PdxS/SNZ family. In terms of assembly, in the presence of PdxT, forms a dodecamer of heterodimers.

It catalyses the reaction aldehydo-D-ribose 5-phosphate + D-glyceraldehyde 3-phosphate + L-glutamine = pyridoxal 5'-phosphate + L-glutamate + phosphate + 3 H2O + H(+). It participates in cofactor biosynthesis; pyridoxal 5'-phosphate biosynthesis. Its function is as follows. Catalyzes the formation of pyridoxal 5'-phosphate from ribose 5-phosphate (RBP), glyceraldehyde 3-phosphate (G3P) and ammonia. The ammonia is provided by the PdxT subunit. Can also use ribulose 5-phosphate and dihydroxyacetone phosphate as substrates, resulting from enzyme-catalyzed isomerization of RBP and G3P, respectively. This is Pyridoxal 5'-phosphate synthase subunit PdxS from Streptomyces avermitilis (strain ATCC 31267 / DSM 46492 / JCM 5070 / NBRC 14893 / NCIMB 12804 / NRRL 8165 / MA-4680).